An 81-amino-acid chain; its full sequence is Cytotoxin I-like T-15 (81 aa).

The signal sequence occupies residues 1 to 21 (MKTLLLTLVVVTIVCLDLGYT). Intrachain disulfides connect cysteine 24/cysteine 42, cysteine 35/cysteine 59, cysteine 63/cysteine 74, and cysteine 75/cysteine 80.

Belongs to the three-finger toxin family. Short-chain subfamily. Type IA cytotoxin sub-subfamily. In terms of assembly, monomer in solution; Homodimer and oligomer in the presence of negatively charged lipids forming a pore with a size ranging between 20 and 30 Angstroms. In terms of tissue distribution, expressed by the venom gland.

It localises to the secreted. The protein localises to the target cell membrane. In terms of biological role, shows cytolytic activity on many different cells by forming pore in lipid membranes. In vivo, increases heart rate or kills the animal by cardiac arrest. In addition, it binds to heparin with high affinity, interacts with Kv channel-interacting protein 1 (KCNIP1) in a calcium-independent manner, and binds to integrin alpha-V/beta-3 (ITGAV/ITGB3) with moderate affinity. The sequence is that of Cytotoxin I-like T-15 from Naja atra (Chinese cobra).